The following is a 93-amino-acid chain: Small ribosomal subunit protein uS19 (93 aa).

This sequence belongs to the universal ribosomal protein uS19 family.

In terms of biological role, protein S19 forms a complex with S13 that binds strongly to the 16S ribosomal RNA. The polypeptide is Small ribosomal subunit protein uS19 (Rhodococcus erythropolis (strain PR4 / NBRC 100887)).